The chain runs to 515 residues: tRNA-2-methylthio-N(6)-dimethylallyladenosine synthase (515 aa).

The 116-residue stretch at 25–140 folds into the MTTase N-terminal domain; it reads KTYQVRTFGC…LPALLNRARH (116 aa). Residues C34, C69, C103, C177, C181, and C184 each coordinate [4Fe-4S] cluster. The 231-residue stretch at 163–393 folds into the Radical SAM core domain; that stretch reads RDSVYAGWVS…TALQDRIAAE (231 aa). In terms of domain architecture, TRAM spans 396-466; it reads AKQLGRKVEV…AFHLVADPAG (71 aa). The interval 482 to 515 is disordered; it reads DRSQADSCGVPAAGAASGKAGVSLGMPSLPTRRA. Over residues 490 to 506 the composition is skewed to low complexity; the sequence is GVPAAGAASGKAGVSLG.

This sequence belongs to the methylthiotransferase family. MiaB subfamily. In terms of assembly, monomer. [4Fe-4S] cluster serves as cofactor.

The protein resides in the cytoplasm. It carries out the reaction N(6)-dimethylallyladenosine(37) in tRNA + (sulfur carrier)-SH + AH2 + 2 S-adenosyl-L-methionine = 2-methylsulfanyl-N(6)-dimethylallyladenosine(37) in tRNA + (sulfur carrier)-H + 5'-deoxyadenosine + L-methionine + A + S-adenosyl-L-homocysteine + 2 H(+). Its function is as follows. Catalyzes the methylthiolation of N6-(dimethylallyl)adenosine (i(6)A), leading to the formation of 2-methylthio-N6-(dimethylallyl)adenosine (ms(2)i(6)A) at position 37 in tRNAs that read codons beginning with uridine. The protein is tRNA-2-methylthio-N(6)-dimethylallyladenosine synthase of Paenarthrobacter aurescens (strain TC1).